The chain runs to 545 residues: Chaperonin GroEL 1 (545 aa).

ATP-binding positions include 30–33, K51, 87–91, G415, and D495; these read TLGP and DGTTT.

This sequence belongs to the chaperonin (HSP60) family. In terms of assembly, forms a cylinder of 14 subunits composed of two heptameric rings stacked back-to-back. Interacts with the co-chaperonin GroES.

It is found in the cytoplasm. It carries out the reaction ATP + H2O + a folded polypeptide = ADP + phosphate + an unfolded polypeptide.. Together with its co-chaperonin GroES, plays an essential role in assisting protein folding. The GroEL-GroES system forms a nano-cage that allows encapsulation of the non-native substrate proteins and provides a physical environment optimized to promote and accelerate protein folding. The chain is Chaperonin GroEL 1 from Rhizobium meliloti (strain 1021) (Ensifer meliloti).